A 374-amino-acid chain; its full sequence is Gibberellin 3-beta-dioxygenase 1 (374 aa).

The 102-residue stretch at 206–307 (KACAALQLNS…RFSVAYLYGP (102 aa)) folds into the Fe2OG dioxygenase domain. H231, D233, and H288 together coordinate Fe cation. The active site involves R298. Residue R298 participates in 2-oxoglutarate binding.

Belongs to the iron/ascorbate-dependent oxidoreductase family. GA3OX subfamily. Requires L-ascorbate as cofactor. The cofactor is Fe(2+). In terms of tissue distribution, expressed in radicles, roots, internodes, cotyledons, leaves and shoots. Barely detected in developing seeds. Not detected in flowers or young fruits.

The catalysed reaction is gibberellin A20 + 2-oxoglutarate + O2 = gibberellin A1 + succinate + CO2. It participates in plant hormone biosynthesis; gibberellin biosynthesis. In terms of biological role, converts the inactive gibberellin (GA) precursors GA9 and GA20 in the bioactives gibberellins GA4 and GA1. Has a small activity on GA29, producing GA8. Unable to convert GA20 to GA5, GA5 to GA3 or GA12 to GA14. Involved in the production of bioactive GA for vegetative growth and development, but not for the 3-beta-hydroxylation of GA in developing seeds. In Pisum sativum (Garden pea), this protein is Gibberellin 3-beta-dioxygenase 1 (LE).